The primary structure comprises 362 residues: Chorismate synthase (362 aa).

Residues R47 and R53 each coordinate NADP(+). FMN-binding positions include 124–126 (RSS), G285, 300–304 (KPTAT), and R326.

The protein belongs to the chorismate synthase family. In terms of assembly, homotetramer. It depends on FMNH2 as a cofactor.

It carries out the reaction 5-O-(1-carboxyvinyl)-3-phosphoshikimate = chorismate + phosphate. It participates in metabolic intermediate biosynthesis; chorismate biosynthesis; chorismate from D-erythrose 4-phosphate and phosphoenolpyruvate: step 7/7. Catalyzes the anti-1,4-elimination of the C-3 phosphate and the C-6 proR hydrogen from 5-enolpyruvylshikimate-3-phosphate (EPSP) to yield chorismate, which is the branch point compound that serves as the starting substrate for the three terminal pathways of aromatic amino acid biosynthesis. This reaction introduces a second double bond into the aromatic ring system. The polypeptide is Chorismate synthase (Cyanothece sp. (strain PCC 7425 / ATCC 29141)).